The following is a 354-amino-acid chain: Protein RecA (354 aa).

Residue 67-74 (GPESSGKT) coordinates ATP. The tract at residues 331–354 (GGANSSDSKTESDENIDLETGEVF) is disordered. The span at 343-354 (DENIDLETGEVF) shows a compositional bias: acidic residues.

The protein belongs to the RecA family.

It is found in the cytoplasm. Can catalyze the hydrolysis of ATP in the presence of single-stranded DNA, the ATP-dependent uptake of single-stranded DNA by duplex DNA, and the ATP-dependent hybridization of homologous single-stranded DNAs. It interacts with LexA causing its activation and leading to its autocatalytic cleavage. The protein is Protein RecA of Shewanella frigidimarina (strain NCIMB 400).